The sequence spans 95 residues: Complement inhibitor RaCI5 (95 aa).

The signal sequence occupies residues 1-21; it reads MNAVIVLCVTISAVLIHQCYS. Intrachain disulfides connect Cys35–Cys59, Cys40–Cys61, and Cys55–Cys76.

This sequence belongs to the RaCI family. Expressed in salivary glands.

The protein resides in the secreted. Functionally, complement inhibitor. Prevents complement-mediated C5 activation by binding to C5. Binds C5 at a different binding site than the other tick complement inhibitors OmCI and CirpT1, and the drug eculizumab. The polypeptide is Complement inhibitor RaCI5 (Rhipicephalus appendiculatus (Brown ear tick)).